Here is a 700-residue protein sequence, read N- to C-terminus: MNNLSYLEPDYSEFVEVDPTGRYGRYNEVLGKGASKTVYRAFDEYEGIEVAWNQVKLYDFLQSPEDLERLYCEIHLLKTLKHKNIMKFYTSWVDTANRNINFVTELFTSGTLRQYRLRHKRVNIRAMKHWCRQILRGLHYLHSHDPPVIHRDLKCDNIFVNGNQGEVKIGDLGLAAILRKSHAAHCVGTPEFMAPEVYEEAYNELVDIYSFGMCILEMVTFDYPYSECTHPAQIYKKVMSGKKPDALYKVKDPEVKCFIEKCLATVSLRVSARELLDDPFLRIDDGEFDLRSVDMEDSVGPLYRQPHHLPDYYNYPSNSSSLNRQYSNGNYPSNSSSLNRQYSNGYNSHHEYQNGWAYNPAETEETHGIELFESRNNDDQEEEKKSGNVDITIKGKRRDDGGLFLRLRIADKEGRVRNIYFPFDIETDTALSVATEMVAELDMDDHGVTKIANMIDGEISSLVPSWRPGPEFEECLAAAAAANAASICNNCVSNRTSMGSVMDFLRTNPGANVIQCCRNGCGETHGRFEEITIRETEVRLRELWKLQQQQESRELSSIDSGHNHSEEEEEEEVLYEDPENMFSCEAGNEINHISGSGSFSFMPSKYCDEPSEKTENQVQQELRWLKAKCQIELRDIQDEQLKTRWPESGEEVEISPKDGFLGSVSGLGREEDTVKEMFGERLVPKCLKRTTSLPVDAIDS.

Residues 24–281 enclose the Protein kinase domain; that stretch reads GRYNEVLGKG…ARELLDDPFL (258 aa). ATP contacts are provided by residues 104–107 and lysine 154; that span reads TELF. Catalysis depends on aspartate 171, which acts as the Proton acceptor. The segment covering 314-339 has biased composition (low complexity); the sequence is NYPSNSSSLNRQYSNGNYPSNSSSLN. Disordered stretches follow at residues 314–345, 551–575, and 647–666; these read NYPS…YSNG, ESRE…EVLY, and ESGE…SVSG. The segment covering 551–565 has biased composition (basic and acidic residues); that stretch reads ESRELSSIDSGHNHS. Over residues 566–575 the composition is skewed to acidic residues; it reads EEEEEEEVLY.

This sequence belongs to the protein kinase superfamily. Ser/Thr protein kinase family. WNK subfamily. Post-translationally, autophosphorylated.

The catalysed reaction is L-seryl-[protein] + ATP = O-phospho-L-seryl-[protein] + ADP + H(+). The enzyme catalyses L-threonyl-[protein] + ATP = O-phospho-L-threonyl-[protein] + ADP + H(+). Functionally, regulates flowering time by modulating the photoperiod pathway. Phosphorylates APRR3. The chain is Serine/threonine-protein kinase WNK1 (WNK1) from Arabidopsis thaliana (Mouse-ear cress).